Reading from the N-terminus, the 313-residue chain is Protein FixB (313 aa).

255-283 contributes to the FAD binding site; the sequence is LYLAVGISGQIQHMVGANASQTIFAINKD.

Belongs to the ETF alpha-subunit/FixB family. Heterodimer of FixA and FixB.

Its pathway is amine and polyamine metabolism; carnitine metabolism. Its function is as follows. Required for anaerobic carnitine reduction. May bring reductant to CaiA. This Escherichia coli O81 (strain ED1a) protein is Protein FixB.